A 389-amino-acid polypeptide reads, in one-letter code: Succinate--CoA ligase [ADP-forming] subunit beta (389 aa).

The region spanning 9 to 236 (RDMFEAHGVP…KDSADPLEAK (228 aa)) is the ATP-grasp domain. Residues Lys-45, 52–54 (GRG), Ala-94, and Glu-99 each bind ATP. Positions 191 and 205 each coordinate Mg(2+). Substrate contacts are provided by residues Asn-256 and 318–320 (GIT).

The protein belongs to the succinate/malate CoA ligase beta subunit family. Heterotetramer of two alpha and two beta subunits. Requires Mg(2+) as cofactor.

The catalysed reaction is succinate + ATP + CoA = succinyl-CoA + ADP + phosphate. It carries out the reaction GTP + succinate + CoA = succinyl-CoA + GDP + phosphate. It participates in carbohydrate metabolism; tricarboxylic acid cycle; succinate from succinyl-CoA (ligase route): step 1/1. In terms of biological role, succinyl-CoA synthetase functions in the citric acid cycle (TCA), coupling the hydrolysis of succinyl-CoA to the synthesis of either ATP or GTP and thus represents the only step of substrate-level phosphorylation in the TCA. The beta subunit provides nucleotide specificity of the enzyme and binds the substrate succinate, while the binding sites for coenzyme A and phosphate are found in the alpha subunit. This Renibacterium salmoninarum (strain ATCC 33209 / DSM 20767 / JCM 11484 / NBRC 15589 / NCIMB 2235) protein is Succinate--CoA ligase [ADP-forming] subunit beta.